A 263-amino-acid polypeptide reads, in one-letter code: MWDPAVYLAFADHRGRPFYDLVSRIGAKRARRVVDLGCGPGNLTRYLARRWPEAIIEAWDSSPQMVAAARERGIDATTGDLRTWKPKPDTDVVISSAALHWVPEHADLMVQWATVLPHGSWIAVQVPGNFETPSHAVVRALARREPYAKLVRDIPFRVGAVVGSPASYAGLLMDAGCKVDAWDPTYLHQLTGKNPVLEWITGTALVPVRERFDDVSWEQFRQELIPLLDDAYPPRSDGTTMFPFRRLFIVAEVGGARRSADVS.

The protein belongs to the methyltransferase superfamily. Tam family.

It is found in the cytoplasm. It carries out the reaction trans-aconitate + S-adenosyl-L-methionine = (E)-3-(methoxycarbonyl)pent-2-enedioate + S-adenosyl-L-homocysteine. Catalyzes the S-adenosylmethionine monomethyl esterification of trans-aconitate. This is Trans-aconitate 2-methyltransferase from Mycobacterium ulcerans (strain Agy99).